We begin with the raw amino-acid sequence, 284 residues long: Bifunctional protein FolD (284 aa).

Residues 165–167 (GRS), Ser190, and Ile231 contribute to the NADP(+) site.

Belongs to the tetrahydrofolate dehydrogenase/cyclohydrolase family. In terms of assembly, homodimer.

It carries out the reaction (6R)-5,10-methylene-5,6,7,8-tetrahydrofolate + NADP(+) = (6R)-5,10-methenyltetrahydrofolate + NADPH. It catalyses the reaction (6R)-5,10-methenyltetrahydrofolate + H2O = (6R)-10-formyltetrahydrofolate + H(+). It participates in one-carbon metabolism; tetrahydrofolate interconversion. Its function is as follows. Catalyzes the oxidation of 5,10-methylenetetrahydrofolate to 5,10-methenyltetrahydrofolate and then the hydrolysis of 5,10-methenyltetrahydrofolate to 10-formyltetrahydrofolate. In Streptococcus thermophilus (strain ATCC BAA-491 / LMD-9), this protein is Bifunctional protein FolD.